The following is a 449-amino-acid chain: PC-esterase domain-containing protein 1A (449 aa).

It belongs to the PC-esterase family.

The polypeptide is PC-esterase domain-containing protein 1A (Pced1a) (Mus musculus (Mouse)).